Reading from the N-terminus, the 477-residue chain is Bifunctional protein HldE (477 aa).

The tract at residues 1 to 318 (MKVNLPAFER…ENAVRGRADT (318 aa)) is ribokinase. 195–198 (NLSE) lines the ATP pocket. Aspartate 264 is an active-site residue. Positions 344-477 (MTNGVFDILH…IKKIQTESEK (134 aa)) are cytidylyltransferase.

In the N-terminal section; belongs to the carbohydrate kinase PfkB family. The protein in the C-terminal section; belongs to the cytidylyltransferase family. In terms of assembly, homodimer.

The catalysed reaction is D-glycero-beta-D-manno-heptose 7-phosphate + ATP = D-glycero-beta-D-manno-heptose 1,7-bisphosphate + ADP + H(+). It carries out the reaction D-glycero-beta-D-manno-heptose 1-phosphate + ATP + H(+) = ADP-D-glycero-beta-D-manno-heptose + diphosphate. It functions in the pathway nucleotide-sugar biosynthesis; ADP-L-glycero-beta-D-manno-heptose biosynthesis; ADP-L-glycero-beta-D-manno-heptose from D-glycero-beta-D-manno-heptose 7-phosphate: step 1/4. It participates in nucleotide-sugar biosynthesis; ADP-L-glycero-beta-D-manno-heptose biosynthesis; ADP-L-glycero-beta-D-manno-heptose from D-glycero-beta-D-manno-heptose 7-phosphate: step 3/4. Catalyzes the phosphorylation of D-glycero-D-manno-heptose 7-phosphate at the C-1 position to selectively form D-glycero-beta-D-manno-heptose-1,7-bisphosphate. In terms of biological role, catalyzes the ADP transfer from ATP to D-glycero-beta-D-manno-heptose 1-phosphate, yielding ADP-D-glycero-beta-D-manno-heptose. The chain is Bifunctional protein HldE from Salmonella agona (strain SL483).